A 356-amino-acid chain; its full sequence is Dual-specificity RNA methyltransferase RlmN (356 aa).

E89 functions as the Proton acceptor in the catalytic mechanism. The region spanning 108-341 is the Radical SAM core domain; that stretch reads SHARYTICVS…CTIRESKGLD (234 aa). C115 and C346 are joined by a disulfide. Residues C122, C126, and C129 each coordinate [4Fe-4S] cluster. S-adenosyl-L-methionine is bound by residues 172-173, S204, 227-229, and N303; these read GE and SLH. The active-site S-methylcysteine intermediate is C346.

The protein belongs to the radical SAM superfamily. RlmN family. [4Fe-4S] cluster serves as cofactor.

It is found in the cytoplasm. It catalyses the reaction adenosine(2503) in 23S rRNA + 2 reduced [2Fe-2S]-[ferredoxin] + 2 S-adenosyl-L-methionine = 2-methyladenosine(2503) in 23S rRNA + 5'-deoxyadenosine + L-methionine + 2 oxidized [2Fe-2S]-[ferredoxin] + S-adenosyl-L-homocysteine. The enzyme catalyses adenosine(37) in tRNA + 2 reduced [2Fe-2S]-[ferredoxin] + 2 S-adenosyl-L-methionine = 2-methyladenosine(37) in tRNA + 5'-deoxyadenosine + L-methionine + 2 oxidized [2Fe-2S]-[ferredoxin] + S-adenosyl-L-homocysteine. In terms of biological role, specifically methylates position 2 of adenine 2503 in 23S rRNA and position 2 of adenine 37 in tRNAs. m2A2503 modification seems to play a crucial role in the proofreading step occurring at the peptidyl transferase center and thus would serve to optimize ribosomal fidelity. This is Dual-specificity RNA methyltransferase RlmN from Campylobacter jejuni subsp. jejuni serotype O:2 (strain ATCC 700819 / NCTC 11168).